A 201-amino-acid polypeptide reads, in one-letter code: Lymphocyte antigen 6 complex locus protein G5b (201 aa).

A signal peptide spans 1–18; it reads MKVHMLVGVLVMVGFTVG. The region spanning 26–118 is the UPAR/Ly6 domain; the sequence is RTCHFCLVED…SPQLQSSLPE (93 aa). Intrachain disulfides connect Cys28–Cys55, Cys31–Cys40, Cys47–Cys73, Cys81–Cys98, and Cys99–Cys104. N-linked (GlcNAc...) asparagine glycans are attached at residues Asn141 and Asn183.

Forms oligomer. N-glycosylated.

The protein resides in the secreted. The chain is Lymphocyte antigen 6 complex locus protein G5b (LY6G5B) from Homo sapiens (Human).